The sequence spans 326 residues: Large ribosomal subunit protein uL4 (326 aa).

The large ribosomal subunit protein uL4 stretch occupies residues 1 to 211 (MASCVVKNWQ…EKLKARWGSG (211 aa)). Disordered regions lie at residues 44 to 76 (ARQG…ARAG) and 211 to 326 (GAAA…EDND). Positions 60–71 (GGRKPWRQKGTG) are enriched in basic residues. Residues 212–326 (AAAAAPTQAD…TAAAEEEDND (115 aa)) are unknown. Residues 221 to 238 (DRLEDQAQAAEREARPVE) are compositionally biased toward basic and acidic residues. 2 stretches are compositionally biased toward low complexity: residues 252–279 (EAQA…QVQE) and 294–312 (QGQA…PPAG). Residues 313 to 326 (EEAETAAAEEEDND) are compositionally biased toward acidic residues.

Belongs to the universal ribosomal protein uL4 family. As to quaternary structure, part of the 50S ribosomal subunit.

In terms of biological role, one of the primary rRNA binding proteins, this protein initially binds near the 5'-end of the 23S rRNA. It is important during the early stages of 50S assembly. It makes multiple contacts with different domains of the 23S rRNA in the assembled 50S subunit and ribosome. Functionally, forms part of the polypeptide exit tunnel. This is Large ribosomal subunit protein uL4 from Synechococcus sp. (strain JA-3-3Ab) (Cyanobacteria bacterium Yellowstone A-Prime).